The sequence spans 352 residues: Ribosomal RNA large subunit methyltransferase M (352 aa).

S-adenosyl-L-methionine contacts are provided by residues S184, 217 to 220 (APGG), D236, D256, and D272. K301 acts as the Proton acceptor in catalysis.

This sequence belongs to the class I-like SAM-binding methyltransferase superfamily. RNA methyltransferase RlmE family. RlmM subfamily. Monomer.

Its subcellular location is the cytoplasm. It carries out the reaction cytidine(2498) in 23S rRNA + S-adenosyl-L-methionine = 2'-O-methylcytidine(2498) in 23S rRNA + S-adenosyl-L-homocysteine + H(+). In terms of biological role, catalyzes the 2'-O-methylation at nucleotide C2498 in 23S rRNA. The protein is Ribosomal RNA large subunit methyltransferase M of Pseudomonas aeruginosa (strain LESB58).